A 712-amino-acid polypeptide reads, in one-letter code: Elongation factor G (712 aa).

The tr-type G domain occupies 8–290 (TRYRNIGISA…AVIEFLPSPT (283 aa)). GTP is bound by residues 17–24 (AHIDAGKT), 88–92 (DTPGH), and 142–145 (NKMD).

The protein belongs to the TRAFAC class translation factor GTPase superfamily. Classic translation factor GTPase family. EF-G/EF-2 subfamily.

The protein resides in the cytoplasm. Catalyzes the GTP-dependent ribosomal translocation step during translation elongation. During this step, the ribosome changes from the pre-translocational (PRE) to the post-translocational (POST) state as the newly formed A-site-bound peptidyl-tRNA and P-site-bound deacylated tRNA move to the P and E sites, respectively. Catalyzes the coordinated movement of the two tRNA molecules, the mRNA and conformational changes in the ribosome. The polypeptide is Elongation factor G (Acinetobacter baumannii (strain SDF)).